We begin with the raw amino-acid sequence, 320 residues long: Probable movement protein (320 aa).

Residues H144, D171, and S199 contribute to the active site. Disordered regions lie at residues 251-270 (RRSRSISAKRGPNSRVQEKR) and 286-320 (EFGRRASASEAPPGRSISMEDSHRPGKGTSDGSSP).

This sequence belongs to the tobamoviruses movement protein family.

Functionally, may play a role in virus cell to cell movement by increasing the size exclusion limit of plasmodesmata and forming a complex with viral RNA to assist its movement. May also have a papain-like protease activity and cleave the genome polyprotein. The protein is Probable movement protein of Malus sylvestris (European crab apple).